The sequence spans 331 residues: Cytosolic Fe-S cluster assembly factor NBP35 (331 aa).

A compositionally biased stretch (polar residues) spans 1 to 10 (MSPSQTQIEK). The tract at residues 1 to 32 (MSPSQTQIEKSQLAAPEPEHCPGPESELAGQG) is disordered. The [4Fe-4S] cluster site is built by C21, C35, C38, and C44. 75–82 (GKGGVGKS) provides a ligand contact to ATP. [4Fe-4S] cluster is bound by residues C249 and C252.

The protein belongs to the Mrp/NBP35 ATP-binding proteins family. NUBP1/NBP35 subfamily. Heterotetramer of 2 NBP35 and 2 CFD1 chains. [4Fe-4S] cluster is required as a cofactor.

The protein resides in the cytoplasm. Its subcellular location is the nucleus. Functionally, component of the cytosolic iron-sulfur (Fe/S) protein assembly (CIA) machinery. Required for maturation of extramitochondrial Fe-S proteins. The NBP35-CFD1 heterotetramer forms a Fe-S scaffold complex, mediating the de novo assembly of an Fe-S cluster and its transfer to target apoproteins. Required for biogenesis and export of both ribosomal subunits, which may reflect a role in assembly of the Fe/S clusters in RLI1, a protein which performs rRNA processing and ribosome export. The sequence is that of Cytosolic Fe-S cluster assembly factor NBP35 from Candida albicans (strain SC5314 / ATCC MYA-2876) (Yeast).